A 134-amino-acid chain; its full sequence is Small ribosomal subunit protein uS9 (134 aa).

This sequence belongs to the universal ribosomal protein uS9 family.

The sequence is that of Small ribosomal subunit protein uS9 from Pseudothermotoga lettingae (strain ATCC BAA-301 / DSM 14385 / NBRC 107922 / TMO) (Thermotoga lettingae).